Consider the following 64-residue polypeptide: Large ribosomal subunit protein uL1 (64 aa).

The protein belongs to the universal ribosomal protein uL1 family. Part of the 50S ribosomal subunit.

Its function is as follows. Binds directly to 23S rRNA. The L1 stalk is quite mobile in the ribosome, and is involved in E site tRNA release. In terms of biological role, protein L1 is also a translational repressor protein, it controls the translation of the L11 operon by binding to its mRNA. The polypeptide is Large ribosomal subunit protein uL1 (rplA) (Streptomyces lavendulae).